Reading from the N-terminus, the 266-residue chain is MNQRLVYVVSDSGGETAELVVRAAASQFYNSHIQLKRVPYVEDKTMLAEVVALAKMNQAIIAFTLVVPEMRQFLIEEAAREGVVAYDIIGPLIEKMSDLFKLTPRYEPGQVRVLDEDYFKKIEAIEFAVKYDDGRDPRGILRADIVLIGVSRTSKTPLSQYLAHKRLKVANVPIVPEVEPPEQLFKVPPEKCFGLKISPEKLLSIRRERLKSLGLNDQAIYANMDRIKEELAYFDGIVKKIGCDVIDVTNKAVEETANIIMKKRRL.

149 to 156 (GVSRTSKT) contacts ADP.

It belongs to the pyruvate, phosphate/water dikinase regulatory protein family. PDRP subfamily.

It catalyses the reaction N(tele)-phospho-L-histidyl/L-threonyl-[pyruvate, phosphate dikinase] + ADP = N(tele)-phospho-L-histidyl/O-phospho-L-threonyl-[pyruvate, phosphate dikinase] + AMP + H(+). The enzyme catalyses N(tele)-phospho-L-histidyl/O-phospho-L-threonyl-[pyruvate, phosphate dikinase] + phosphate + H(+) = N(tele)-phospho-L-histidyl/L-threonyl-[pyruvate, phosphate dikinase] + diphosphate. In terms of biological role, bifunctional serine/threonine kinase and phosphorylase involved in the regulation of the pyruvate, phosphate dikinase (PPDK) by catalyzing its phosphorylation/dephosphorylation. In Geobacillus sp. (strain WCH70), this protein is Putative pyruvate, phosphate dikinase regulatory protein.